The chain runs to 154 residues: Large ribosomal subunit protein uL15 (154 aa).

A compositionally biased stretch (basic and acidic residues) spans 1–13 (MKLHELKPAEGSR). Residues 1–52 (MKLHELKPAEGSRKNRKRVGRGPGGTDKTAGRGHKGQKSRSGAGKGSFFEGG) form a disordered region.

Belongs to the universal ribosomal protein uL15 family. In terms of assembly, part of the 50S ribosomal subunit.

In terms of biological role, binds to the 23S rRNA. This chain is Large ribosomal subunit protein uL15, found in Deinococcus deserti (strain DSM 17065 / CIP 109153 / LMG 22923 / VCD115).